Here is a 358-residue protein sequence, read N- to C-terminus: Probable D-xylulose reductase A (358 aa).

Zn(2+) contacts are provided by Cys-47, His-72, and Glu-73. 182 to 187 provides a ligand contact to NAD(+); it reads GAGPVG.

The protein belongs to the zinc-containing alcohol dehydrogenase family. The cofactor is Zn(2+).

The catalysed reaction is xylitol + NAD(+) = D-xylulose + NADH + H(+). It participates in carbohydrate degradation; L-arabinose degradation via L-arabinitol; D-xylulose 5-phosphate from L-arabinose (fungal route): step 4/5. Its function is as follows. Xylitol dehydrogenase which catalyzes the conversion of xylitol to D-xylulose. Xylose is a major component of hemicelluloses such as xylan. Most fungi utilize D-xylose via three enzymatic reactions, xylose reductase (XR), xylitol dehydrogenase (XDH), and xylulokinase, to form xylulose 5-phosphate, which enters pentose phosphate pathway. The sequence is that of Probable D-xylulose reductase A (xdhA) from Aspergillus clavatus (strain ATCC 1007 / CBS 513.65 / DSM 816 / NCTC 3887 / NRRL 1 / QM 1276 / 107).